We begin with the raw amino-acid sequence, 418 residues long: Histidine--tRNA ligase (418 aa).

The protein belongs to the class-II aminoacyl-tRNA synthetase family.

The protein localises to the cytoplasm. It catalyses the reaction tRNA(His) + L-histidine + ATP = L-histidyl-tRNA(His) + AMP + diphosphate + H(+). This Methanococcus maripaludis (strain C6 / ATCC BAA-1332) protein is Histidine--tRNA ligase.